The chain runs to 1042 residues: Starch synthase 3, chloroplastic/amyloplastic (1042 aa).

The transit peptide at M1–T44 directs the protein to the chloroplast. The interval M1–V63 is disordered. The span at N54 to V63 shows a compositional bias: polar residues. Residues E247 to L302 are a coiled coil. K608 serves as a coordination point for ADP-alpha-D-glucose.

Belongs to the glycosyltransferase 1 family. Bacterial/plant glycogen synthase subfamily. Expressed in leaves and flowers.

The protein localises to the plastid. It localises to the chloroplast. Its subcellular location is the amyloplast. It catalyses the reaction [(1-&gt;4)-alpha-D-glucosyl](n) + ADP-alpha-D-glucose = [(1-&gt;4)-alpha-D-glucosyl](n+1) + ADP + H(+). Its pathway is glycan biosynthesis; starch biosynthesis. Functionally, involved in the synthesis of glycan chains within amylopectin in leaves. May play a regulatory role in the control of starch accumulation in plastids. This is Starch synthase 3, chloroplastic/amyloplastic (SS3) from Arabidopsis thaliana (Mouse-ear cress).